We begin with the raw amino-acid sequence, 787 residues long: Endonuclease MutS2 (787 aa).

An ATP-binding site is contributed by 335 to 342; that stretch reads GPNTGGKT. Residues 712–787 form the Smr domain; that stretch reads LDLRGERYED…GLGNTVIELK (76 aa).

The protein belongs to the DNA mismatch repair MutS family. MutS2 subfamily. In terms of assembly, homodimer. Binds to stalled ribosomes, contacting rRNA.

Its function is as follows. Endonuclease that is involved in the suppression of homologous recombination and thus may have a key role in the control of bacterial genetic diversity. In terms of biological role, acts as a ribosome collision sensor, splitting the ribosome into its 2 subunits. Detects stalled/collided 70S ribosomes which it binds and splits by an ATP-hydrolysis driven conformational change. Acts upstream of the ribosome quality control system (RQC), a ribosome-associated complex that mediates the extraction of incompletely synthesized nascent chains from stalled ribosomes and their subsequent degradation. Probably generates substrates for RQC. This is Endonuclease MutS2 from Shouchella clausii (strain KSM-K16) (Alkalihalobacillus clausii).